The primary structure comprises 142 residues: Fluoride-specific ion channel FluC 1 (142 aa).

Transmembrane regions (helical) follow at residues 17-37, 42-62, 80-100, and 109-129; these read AWVS…GLAL, GFPF…GFYA, FVMT…LETF, and YIAL…VWLG. 2 residues coordinate Na(+): G87 and T90.

This sequence belongs to the fluoride channel Fluc/FEX (TC 1.A.43) family.

The protein resides in the cell inner membrane. It carries out the reaction fluoride(in) = fluoride(out). Na(+) is not transported, but it plays an essential structural role and its presence is essential for fluoride channel function. Fluoride-specific ion channel. Important for reducing fluoride concentration in the cell, thus reducing its toxicity. This is Fluoride-specific ion channel FluC 1 from Bradyrhizobium diazoefficiens (strain JCM 10833 / BCRC 13528 / IAM 13628 / NBRC 14792 / USDA 110).